The sequence spans 371 residues: uncharacterized protein (371 aa).

The protein to A.pernix APE_1804 and S.solfataricus SSO2105.

This is an uncharacterized protein from Aeropyrum pernix (strain ATCC 700893 / DSM 11879 / JCM 9820 / NBRC 100138 / K1).